A 361-amino-acid chain; its full sequence is Cell cycle control protein 50A (361 aa).

The interval M1–P28 is disordered. Residue A2 is modified to N-acetylalanine. The segment at A2–G48 is required for ATPase and aminophospholipid flippase activity. The Cytoplasmic portion of the chain corresponds to A2–T49. The interaction with ATP8A2 stretch occupies residues T49–H348. The chain crosses the membrane as a helical span at residues V50–V70. At T71–L325 the chain is on the exoplasmic loop side. 3 cysteine pairs are disulfide-bonded: C91–C104, C94–C102, and C157–C171. Residues N180, N190, and N294 are each glycosylated (N-linked (GlcNAc...) asparagine). Residues G326–I346 traverse the membrane as a helical segment. The Cytoplasmic segment spans residues N347–I361.

It belongs to the CDC50/LEM3 family. In terms of assembly, component of various P4-ATPase flippase complexes which consists of a catalytic alpha subunit and an accessory beta subunit. Interacts with ATP8A1 to form a flippase complex; this complex forms an intermediate phosphoenzyme. Interacts with ATP8A2 to form a flippase complex. ATP8B1:TMEM30A and ATP8B2:TMEM30A flippase complexes have been shown to form intermediate phosphoenzymes in vitro. Interacts with alpha subunits ATP8A1, ATP8B1, ATP8B2, ATP8B4, ATP10A, ATP10B, ATP10D, ATP11A, ATP11B and ATP11C. Post-translationally, N-glycosylated; contributes to ATP8A2:TMEM30A flippase complex assembly but not to functional activity. In terms of tissue distribution, expressed in photoreceptor cells; detected in retina outer segment and other retinal layers (at protein level).

The protein resides in the membrane. The protein localises to the golgi apparatus. It is found in the cytoplasmic vesicle. Its subcellular location is the secretory vesicle membrane. It localises to the apical cell membrane. The protein resides in the photoreceptor inner segment. The protein localises to the cell projection. It is found in the cilium. Its subcellular location is the photoreceptor outer segment. Functionally, accessory component of a P4-ATPase flippase complex which catalyzes the hydrolysis of ATP coupled to the transport of aminophospholipids from the outer to the inner leaflet of various membranes and ensures the maintenance of asymmetric distribution of phospholipids. Phospholipid translocation also seems to be implicated in vesicle formation and in uptake of lipid signaling molecules. The beta subunit may assist in binding of the phospholipid substrate. Required for the proper folding, assembly and ER to Golgi exit of the ATP8A2:TMEM30A flippase complex. ATP8A2:TMEM30A may be involved in regulation of neurite outgrowth, and, reconstituted to liposomes, predomiminantly transports phosphatidylserine (PS) and to a lesser extent phosphatidylethanolamine (PE). The ATP8A1:TMEM30A flippase complex seems to play a role in regulation of cell migration probably involving flippase-mediated translocation of phosphatidylethanolamine (PE) at the plasma membrane. Required for the formation of the ATP8A2, ATP8B1 and ATP8B2 P-type ATPAse intermediate phosphoenzymes. Involved in uptake of platelet-activating factor (PAF). Can also mediate the export of alpha subunits ATP8A1, ATP8B1, ATP8B2, ATP8B4, ATP10A, ATP10B, ATP10D, ATP11A, ATP11B and ATP11C from the ER to other membrane localizations. This chain is Cell cycle control protein 50A, found in Bos taurus (Bovine).